Consider the following 54-residue polypeptide: Relaxin (54 aa).

Gln1 is modified (pyrrolidone carboxylic acid). 3 disulfide bridges follow: Cys10–Cys41, Cys22–Cys54, and Cys40–Cys45.

This sequence belongs to the insulin family. Heterodimer of a B chain and an A chain linked by two disulfide bonds.

Its subcellular location is the secreted. In terms of biological role, relaxin is an ovarian hormone that acts with estrogen to produce dilatation of the birth canal in many mammals. In Balaenoptera acutorostrata (Common minke whale), this protein is Relaxin.